Here is a 67-residue protein sequence, read N- to C-terminus: Conotoxin Cl6.8 (67 aa).

A signal peptide spans 1–22 (MKVTAVLMVAVLVLTACQLTTA). The propeptide occupies 23-39 (NTTDYVRRILARKSTMS). Disulfide bonds link cysteine 43–cysteine 58, cysteine 50–cysteine 62, and cysteine 57–cysteine 66. At cysteine 66 the chain carries Cysteine amide.

It belongs to the conotoxin O1 superfamily. Expressed by the venom duct.

It localises to the secreted. The protein is Conotoxin Cl6.8 of Californiconus californicus (California cone).